Here is a 351-residue protein sequence, read N- to C-terminus: Delta(7)-sterol 5(6)-desaturase (351 aa).

Transmembrane regions (helical) follow at residues 88 to 108, 136 to 156, and 173 to 193; these read LSLF…VASF, GLGA…LELH, and VRLA…IYLL. Residues 180–305 enclose the Fatty acid hydroxylase domain; sequence LFFILFTDFG…FTTLWDRLGG (126 aa). Positions 194–198 match the Histidine box-1 motif; that stretch reads HRWLH. The Histidine box-2 signature appears at 207–211; it reads HKKHH. Residues 237 to 257 traverse the membrane as a helical segment; it reads HLFPMLFPLHKVSYLVLFTFV. A Histidine box-3 motif is present at residues 282–286; that stretch reads HTVHH.

This sequence belongs to the sterol desaturase family. Requires Fe cation as cofactor.

It localises to the endoplasmic reticulum membrane. The catalysed reaction is a Delta(7)-sterol + 2 Fe(II)-[cytochrome b5] + O2 + 2 H(+) = a Delta(5),Delta(7)-sterol + 2 Fe(III)-[cytochrome b5] + 2 H2O. It participates in steroid metabolism; ergosterol biosynthesis; ergosterol from zymosterol: step 3/5. Catalyzes the introduction of a C-5 double bond in the B ring of ergosterol. May contribute to the regulation of ergosterol biosynthesis. The polypeptide is Delta(7)-sterol 5(6)-desaturase (ERG3) (Eremothecium gossypii (strain ATCC 10895 / CBS 109.51 / FGSC 9923 / NRRL Y-1056) (Yeast)).